A 589-amino-acid polypeptide reads, in one-letter code: ATP-dependent lipid A-core flippase (589 aa).

The next 5 membrane-spanning stretches (helical) occupy residues 29–49 (LLLV…TGFL), 70–90 (WLPV…YITD), 157–177 (VIGA…TILV), 261–281 (MIGA…ALAG), and 283–303 (LTAG…PGLK). Residues 32–314 (VAALIAALIE…LTNVQNMVQR (283 aa)) enclose the ABC transmembrane type-1 domain. In terms of domain architecture, ABC transporter spans 346-582 (IEFRDVTARY…GGLYSHLHGM (237 aa)). An ATP-binding site is contributed by 380–387 (GRSGSGKS).

This sequence belongs to the ABC transporter superfamily. Lipid exporter (TC 3.A.1.106) family. As to quaternary structure, homodimer.

The protein resides in the cell inner membrane. The enzyme catalyses ATP + H2O + lipid A-core oligosaccharideSide 1 = ADP + phosphate + lipid A-core oligosaccharideSide 2.. Involved in lipopolysaccharide (LPS) biosynthesis. Translocates lipid A-core from the inner to the outer leaflet of the inner membrane. Transmembrane domains (TMD) form a pore in the inner membrane and the ATP-binding domain (NBD) is responsible for energy generation. In Xanthomonas oryzae pv. oryzae (strain MAFF 311018), this protein is ATP-dependent lipid A-core flippase.